Here is a 109-residue protein sequence, read N- to C-terminus: Phosphoribosyl-AMP cyclohydrolase (109 aa).

D80 lines the Mg(2+) pocket. Residue C81 participates in Zn(2+) binding. Residues D82 and D84 each contribute to the Mg(2+) site. C97 and C104 together coordinate Zn(2+).

This sequence belongs to the PRA-CH family. Homodimer. It depends on Mg(2+) as a cofactor. The cofactor is Zn(2+).

It localises to the cytoplasm. The enzyme catalyses 1-(5-phospho-beta-D-ribosyl)-5'-AMP + H2O = 1-(5-phospho-beta-D-ribosyl)-5-[(5-phospho-beta-D-ribosylamino)methylideneamino]imidazole-4-carboxamide. Its pathway is amino-acid biosynthesis; L-histidine biosynthesis; L-histidine from 5-phospho-alpha-D-ribose 1-diphosphate: step 3/9. Catalyzes the hydrolysis of the adenine ring of phosphoribosyl-AMP. The sequence is that of Phosphoribosyl-AMP cyclohydrolase from Clostridium botulinum (strain Alaska E43 / Type E3).